A 530-amino-acid polypeptide reads, in one-letter code: Arginine--tRNA ligase (530 aa).

The short motif at 113-123 (ANPTGPLHIGH) is the 'HIGH' region element.

It belongs to the class-I aminoacyl-tRNA synthetase family. In terms of assembly, monomer.

The protein resides in the cytoplasm. It carries out the reaction tRNA(Arg) + L-arginine + ATP = L-arginyl-tRNA(Arg) + AMP + diphosphate. This is Arginine--tRNA ligase from Campylobacter jejuni subsp. jejuni serotype O:23/36 (strain 81-176).